The sequence spans 124 residues: Small ribosomal subunit protein bS6 (124 aa).

It belongs to the bacterial ribosomal protein bS6 family.

Binds together with bS18 to 16S ribosomal RNA. This chain is Small ribosomal subunit protein bS6, found in Rippkaea orientalis (strain PCC 8801 / RF-1) (Cyanothece sp. (strain PCC 8801)).